A 253-amino-acid polypeptide reads, in one-letter code: uncharacterized protein (253 aa).

A run of 6 helical transmembrane segments spans residues 17–37 (MWLL…HIIA), 46–66 (IFGF…VFVF), 93–113 (LAAS…YGIW), 139–159 (MYGL…WTVF), 172–192 (AMVL…SPLV), and 222–242 (IHLS…LLIM).

Its subcellular location is the cell membrane. This is an uncharacterized protein from Bacillus subtilis (strain 168).